The primary structure comprises 223 residues: Deoxyribose-phosphate aldolase (223 aa).

The active-site Proton donor/acceptor is the D89. K152 serves as the catalytic Schiff-base intermediate with acetaldehyde. K181 functions as the Proton donor/acceptor in the catalytic mechanism.

It belongs to the DeoC/FbaB aldolase family. DeoC type 1 subfamily.

Its subcellular location is the cytoplasm. It carries out the reaction 2-deoxy-D-ribose 5-phosphate = D-glyceraldehyde 3-phosphate + acetaldehyde. It functions in the pathway carbohydrate degradation; 2-deoxy-D-ribose 1-phosphate degradation; D-glyceraldehyde 3-phosphate and acetaldehyde from 2-deoxy-alpha-D-ribose 1-phosphate: step 2/2. Catalyzes a reversible aldol reaction between acetaldehyde and D-glyceraldehyde 3-phosphate to generate 2-deoxy-D-ribose 5-phosphate. The polypeptide is Deoxyribose-phosphate aldolase (Bacillus mycoides (strain KBAB4) (Bacillus weihenstephanensis)).